Reading from the N-terminus, the 112-residue chain is Nucleoid-associated protein FTF0810c (112 aa).

The tract at residues 1 to 27 is disordered; it reads MNFDMSKLMQQAQKMQEQMKKAQQERE. Basic and acidic residues predominate over residues 17 to 27; that stretch reads EQMKKAQQERE.

This sequence belongs to the YbaB/EbfC family. As to quaternary structure, homodimer.

It localises to the cytoplasm. The protein resides in the nucleoid. In terms of biological role, binds to DNA and alters its conformation. May be involved in regulation of gene expression, nucleoid organization and DNA protection. The chain is Nucleoid-associated protein FTF0810c from Francisella tularensis subsp. tularensis (strain FSC 198).